Consider the following 384-residue polypeptide: MAKHLFTSESVSEGHPDKIADQISDAVLDAILEQDPKARVACETYVKTGMVLVGGEITTSAWVDIEEITRNTVREIGYVHSDMGFDANSCAVLSAIGKQSPDINQGVDRADPLEQGAGDQGLMFGYATNETDVLMPAPITYAHRLVQRQAEVRKNGTLPWLRPDAKSQVTFQYDDGKIVGIDAVVLSTQHSEEIDQKSLQEAVMEEIIKPILPAEWLTSATKFFINPTGRFVIGGPMGDCGLTGRKIIVDTYGGMARHGGGAFSGKDPSKVDRSAAYAARYVAKNIVAAGLADRCEIQVSYAIGVAEPTSIMVETFGTEKVPSEQLTLLVREFFDLRPYGLIQMLDLLHPIYKETAAYGHFGREHFPWEKTDKAQLLREAAGLK.

ATP is bound at residue histidine 15. Position 17 (aspartate 17) interacts with Mg(2+). Glutamate 43 is a binding site for K(+). Residues glutamate 56 and glutamine 99 each contribute to the L-methionine site. Residues 99 to 109 (QSPDINQGVDR) are flexible loop. Residues 164 to 166 (DAK), 230 to 231 (RF), aspartate 239, 245 to 246 (RK), alanine 262, and lysine 266 contribute to the ATP site. Aspartate 239 is an L-methionine binding site. Lysine 270 lines the L-methionine pocket.

It belongs to the AdoMet synthase family. Homotetramer; dimer of dimers. Requires Mg(2+) as cofactor. K(+) serves as cofactor.

It localises to the cytoplasm. The enzyme catalyses L-methionine + ATP + H2O = S-adenosyl-L-methionine + phosphate + diphosphate. The protein operates within amino-acid biosynthesis; S-adenosyl-L-methionine biosynthesis; S-adenosyl-L-methionine from L-methionine: step 1/1. Catalyzes the formation of S-adenosylmethionine (AdoMet) from methionine and ATP. The overall synthetic reaction is composed of two sequential steps, AdoMet formation and the subsequent tripolyphosphate hydrolysis which occurs prior to release of AdoMet from the enzyme. The chain is S-adenosylmethionine synthase from Escherichia fergusonii (strain ATCC 35469 / DSM 13698 / CCUG 18766 / IAM 14443 / JCM 21226 / LMG 7866 / NBRC 102419 / NCTC 12128 / CDC 0568-73).